A 457-amino-acid polypeptide reads, in one-letter code: UPF0328 protein ECU05_0030 (457 aa).

2 disordered regions span residues 1-112 and 157-183; these read MPRP…PTAT and VKSQSVSHRAPITYQPPRPTTTSNPRI. A compositionally biased stretch (basic and acidic residues) spans 74-94; it reads HTEGCHTHEANPEPNTKHTET. A compositionally biased stretch (pro residues) spans 102–112; the sequence is CPPPHPGPTAT.

The protein belongs to the UPF0328 family.

In Encephalitozoon cuniculi (strain GB-M1) (Microsporidian parasite), this protein is UPF0328 protein ECU05_0030.